Here is a 553-residue protein sequence, read N- to C-terminus: Replication factor C large subunit (553 aa).

Residue 50-57 (GGPGVGKT) participates in ATP binding. The disordered stretch occupies residues 438 to 553 (GKRPGKPEAG…SKKQRTLFDF (116 aa)). The span at 442 to 451 (GKPEAGEPRE) shows a compositional bias: basic and acidic residues. Over residues 503–513 (EAPMAAAMPAA) the composition is skewed to low complexity. Positions 532–553 (EPEKPPAAEDKCSKKQRTLFDF) are enriched in basic and acidic residues.

This sequence belongs to the activator 1 small subunits family. RfcL subfamily. As to quaternary structure, heteromultimer composed of small subunits (RfcS) and large subunits (RfcL).

Functionally, part of the RFC clamp loader complex which loads the PCNA sliding clamp onto DNA. The chain is Replication factor C large subunit from Methanocella arvoryzae (strain DSM 22066 / NBRC 105507 / MRE50).